We begin with the raw amino-acid sequence, 360 residues long: Photosystem II protein D1 1 (360 aa).

Helical transmembrane passes span 29-46, 118-133, and 142-156; these read YVGWFGVLLIPTALTAAI, HFLIAIYAYMGRQWEL, and WIPVAFSAPVAAATA. His118 provides a ligand contact to chlorophyll a. Tyr126 contacts pheophytin a. [CaMn4O5] cluster-binding residues include Asp170 and Glu189. The chain crosses the membrane as a helical span at residues 197-218; sequence FHMIGVAGVFGGALFSAMHGSL. His198 contacts chlorophyll a. A quinone-binding positions include His215 and 264-265; that span reads SF. Residue His215 participates in Fe cation binding. His272 lines the Fe cation pocket. A helical membrane pass occupies residues 274–288; the sequence is FLAAWPVIGIWFAAL. Positions 332, 333, 342, and 344 each coordinate [CaMn4O5] cluster. Positions 345 to 360 are excised as a propeptide; that stretch reads SGEVQPIALAAPAIAS.

It belongs to the reaction center PufL/M/PsbA/D family. PSII is composed of 1 copy each of membrane proteins PsbA, PsbB, PsbC, PsbD, PsbE, PsbF, PsbH, PsbI, PsbJ, PsbK, PsbL, PsbM, PsbT, PsbX, PsbY, PsbZ, Psb30/Ycf12, peripheral proteins PsbO, CyanoQ (PsbQ), PsbU, PsbV and a large number of cofactors. It forms dimeric complexes. The D1/D2 heterodimer binds P680, chlorophylls that are the primary electron donor of PSII, and subsequent electron acceptors. It shares a non-heme iron and each subunit binds pheophytin, quinone, additional chlorophylls, carotenoids and lipids. D1 provides most of the ligands for the Mn4-Ca-O5 cluster of the oxygen-evolving complex (OEC). There is also a Cl(-1) ion associated with D1 and D2, which is required for oxygen evolution. The PSII complex binds additional chlorophylls, carotenoids and specific lipids. is required as a cofactor. Tyr-161 forms a radical intermediate that is referred to as redox-active TyrZ, YZ or Y-Z. In terms of processing, C-terminally processed by CtpA; processing is essential to allow assembly of the oxygen-evolving complex and thus photosynthetic growth.

The protein localises to the cellular thylakoid membrane. It carries out the reaction 2 a plastoquinone + 4 hnu + 2 H2O = 2 a plastoquinol + O2. Functionally, photosystem II (PSII) is a light-driven water:plastoquinone oxidoreductase that uses light energy to abstract electrons from H(2)O, generating O(2) and a proton gradient subsequently used for ATP formation. It consists of a core antenna complex that captures photons, and an electron transfer chain that converts photonic excitation into a charge separation. The D1/D2 (PsbA/PsbD) reaction center heterodimer binds P680, the primary electron donor of PSII as well as several subsequent electron acceptors. The chain is Photosystem II protein D1 1 from Trichormus variabilis (strain ATCC 29413 / PCC 7937) (Anabaena variabilis).